Here is a 302-residue protein sequence, read N- to C-terminus: Phosphoribosylaminoimidazole-succinocarboxamide synthase (302 aa).

It belongs to the SAICAR synthetase family.

It carries out the reaction 5-amino-1-(5-phospho-D-ribosyl)imidazole-4-carboxylate + L-aspartate + ATP = (2S)-2-[5-amino-1-(5-phospho-beta-D-ribosyl)imidazole-4-carboxamido]succinate + ADP + phosphate + 2 H(+). It functions in the pathway purine metabolism; IMP biosynthesis via de novo pathway; 5-amino-1-(5-phospho-D-ribosyl)imidazole-4-carboxamide from 5-amino-1-(5-phospho-D-ribosyl)imidazole-4-carboxylate: step 1/2. This chain is Phosphoribosylaminoimidazole-succinocarboxamide synthase, found in Ralstonia nicotianae (strain ATCC BAA-1114 / GMI1000) (Ralstonia solanacearum).